The primary structure comprises 119 residues: Large ribosomal subunit protein uL18 (119 aa).

This sequence belongs to the universal ribosomal protein uL18 family. As to quaternary structure, part of the 50S ribosomal subunit; part of the 5S rRNA/L5/L18/L25 subcomplex. Contacts the 5S and 23S rRNAs.

Functionally, this is one of the proteins that bind and probably mediate the attachment of the 5S RNA into the large ribosomal subunit, where it forms part of the central protuberance. The polypeptide is Large ribosomal subunit protein uL18 (Chlorobaculum tepidum (strain ATCC 49652 / DSM 12025 / NBRC 103806 / TLS) (Chlorobium tepidum)).